A 176-amino-acid chain; its full sequence is NAD(P)H-quinone oxidoreductase subunit 6, chloroplastic (176 aa).

The next 5 helical transmembrane spans lie at 10-30 (ILLV…VLFT), 32-52 (PIFS…FHIL), 61-81 (AQLL…VMFM), 92-112 (LWTV…FSLI), and 152-172 (FYLP…GAIA).

This sequence belongs to the complex I subunit 6 family. In terms of assembly, NDH is composed of at least 16 different subunits, 5 of which are encoded in the nucleus.

It localises to the plastid. The protein localises to the chloroplast thylakoid membrane. It catalyses the reaction a plastoquinone + NADH + (n+1) H(+)(in) = a plastoquinol + NAD(+) + n H(+)(out). It carries out the reaction a plastoquinone + NADPH + (n+1) H(+)(in) = a plastoquinol + NADP(+) + n H(+)(out). In terms of biological role, NDH shuttles electrons from NAD(P)H:plastoquinone, via FMN and iron-sulfur (Fe-S) centers, to quinones in the photosynthetic chain and possibly in a chloroplast respiratory chain. The immediate electron acceptor for the enzyme in this species is believed to be plastoquinone. Couples the redox reaction to proton translocation, and thus conserves the redox energy in a proton gradient. The chain is NAD(P)H-quinone oxidoreductase subunit 6, chloroplastic (ndhG) from Drimys granadensis.